Here is a 250-residue protein sequence, read N- to C-terminus: Indole-3-glycerol phosphate synthase (250 aa).

The protein belongs to the TrpC family.

The catalysed reaction is 1-(2-carboxyphenylamino)-1-deoxy-D-ribulose 5-phosphate + H(+) = (1S,2R)-1-C-(indol-3-yl)glycerol 3-phosphate + CO2 + H2O. The protein operates within amino-acid biosynthesis; L-tryptophan biosynthesis; L-tryptophan from chorismate: step 4/5. The sequence is that of Indole-3-glycerol phosphate synthase from Bacillus velezensis (strain DSM 23117 / BGSC 10A6 / LMG 26770 / FZB42) (Bacillus amyloliquefaciens subsp. plantarum).